The sequence spans 323 residues: Beta-ketoacyl-[acyl-carrier-protein] synthase III (323 aa).

Active-site residues include Cys-113 and His-250. Residues 251 to 255 (QANRR) are ACP-binding. Asn-280 is a catalytic residue.

This sequence belongs to the thiolase-like superfamily. FabH family. As to quaternary structure, homodimer.

The protein resides in the cytoplasm. The enzyme catalyses malonyl-[ACP] + acetyl-CoA + H(+) = 3-oxobutanoyl-[ACP] + CO2 + CoA. The protein operates within lipid metabolism; fatty acid biosynthesis. Its function is as follows. Catalyzes the condensation reaction of fatty acid synthesis by the addition to an acyl acceptor of two carbons from malonyl-ACP. Catalyzes the first condensation reaction which initiates fatty acid synthesis and may therefore play a role in governing the total rate of fatty acid production. Possesses both acetoacetyl-ACP synthase and acetyl transacylase activities. Its substrate specificity determines the biosynthesis of branched-chain and/or straight-chain of fatty acids. This chain is Beta-ketoacyl-[acyl-carrier-protein] synthase III, found in Sinorhizobium medicae (strain WSM419) (Ensifer medicae).